A 724-amino-acid polypeptide reads, in one-letter code: 4-alpha-glucanotransferase (724 aa).

This sequence belongs to the disproportionating enzyme family.

It localises to the cytoplasm. The catalysed reaction is Transfers a segment of a (1-&gt;4)-alpha-D-glucan to a new position in an acceptor, which may be glucose or a (1-&gt;4)-alpha-D-glucan.. The polypeptide is 4-alpha-glucanotransferase (malQ) (Mycobacterium bovis (strain ATCC BAA-935 / AF2122/97)).